The primary structure comprises 736 residues: Phosphoribosylformylglycinamidine synthase subunit PurL (736 aa).

Histidine 50 is an active-site residue. Residues tyrosine 53 and lysine 92 each contribute to the ATP site. Glutamate 94 contacts Mg(2+). Substrate contacts are provided by residues 95–98 (SHNH) and arginine 117. Catalysis depends on histidine 96, which acts as the Proton acceptor. Aspartate 118 is a binding site for Mg(2+). Glutamine 241 is a binding site for substrate. Residue aspartate 269 coordinates Mg(2+). 313–315 (ESQ) contacts substrate. Residues aspartate 495 and glycine 532 each contribute to the ATP site. Asparagine 533 provides a ligand contact to Mg(2+). Serine 535 is a substrate binding site.

This sequence belongs to the FGAMS family. As to quaternary structure, monomer. Part of the FGAM synthase complex composed of 1 PurL, 1 PurQ and 2 PurS subunits.

It is found in the cytoplasm. The catalysed reaction is N(2)-formyl-N(1)-(5-phospho-beta-D-ribosyl)glycinamide + L-glutamine + ATP + H2O = 2-formamido-N(1)-(5-O-phospho-beta-D-ribosyl)acetamidine + L-glutamate + ADP + phosphate + H(+). Its pathway is purine metabolism; IMP biosynthesis via de novo pathway; 5-amino-1-(5-phospho-D-ribosyl)imidazole from N(2)-formyl-N(1)-(5-phospho-D-ribosyl)glycinamide: step 1/2. In terms of biological role, part of the phosphoribosylformylglycinamidine synthase complex involved in the purines biosynthetic pathway. Catalyzes the ATP-dependent conversion of formylglycinamide ribonucleotide (FGAR) and glutamine to yield formylglycinamidine ribonucleotide (FGAM) and glutamate. The FGAM synthase complex is composed of three subunits. PurQ produces an ammonia molecule by converting glutamine to glutamate. PurL transfers the ammonia molecule to FGAR to form FGAM in an ATP-dependent manner. PurS interacts with PurQ and PurL and is thought to assist in the transfer of the ammonia molecule from PurQ to PurL. The protein is Phosphoribosylformylglycinamidine synthase subunit PurL of Bartonella quintana (strain Toulouse) (Rochalimaea quintana).